Consider the following 384-residue polypeptide: Queuine tRNA-ribosyltransferase (384 aa).

Asp-92 functions as the Proton acceptor in the catalytic mechanism. Substrate-binding positions include 92 to 96 (DSGGF), Asp-146, Gln-190, and Gly-217. Residues 248-254 (GVGRPED) form an RNA binding region. Asp-267 acts as the Nucleophile in catalysis. Residues 272–276 (TRHAR) form an RNA binding; important for wobble base 34 recognition region. Residues Cys-305, Cys-307, Cys-310, and His-337 each coordinate Zn(2+).

The protein belongs to the queuine tRNA-ribosyltransferase family. Homodimer. Within each dimer, one monomer is responsible for RNA recognition and catalysis, while the other monomer binds to the replacement base PreQ1. Requires Zn(2+) as cofactor.

It carries out the reaction 7-aminomethyl-7-carbaguanine + guanosine(34) in tRNA = 7-aminomethyl-7-carbaguanosine(34) in tRNA + guanine. It participates in tRNA modification; tRNA-queuosine biosynthesis. Functionally, catalyzes the base-exchange of a guanine (G) residue with the queuine precursor 7-aminomethyl-7-deazaguanine (PreQ1) at position 34 (anticodon wobble position) in tRNAs with GU(N) anticodons (tRNA-Asp, -Asn, -His and -Tyr). Catalysis occurs through a double-displacement mechanism. The nucleophile active site attacks the C1' of nucleotide 34 to detach the guanine base from the RNA, forming a covalent enzyme-RNA intermediate. The proton acceptor active site deprotonates the incoming PreQ1, allowing a nucleophilic attack on the C1' of the ribose to form the product. After dissociation, two additional enzymatic reactions on the tRNA convert PreQ1 to queuine (Q), resulting in the hypermodified nucleoside queuosine (7-(((4,5-cis-dihydroxy-2-cyclopenten-1-yl)amino)methyl)-7-deazaguanosine). This Xylella fastidiosa (strain 9a5c) protein is Queuine tRNA-ribosyltransferase.